The primary structure comprises 639 residues: Protein phosphatase 2C 35 (639 aa).

Residues 227–630 form the PPM-type phosphatase domain; sequence GGDPCGLQWA…DDVSVIVISL (404 aa). Residues aspartate 262 and glycine 263 each coordinate Mn(2+). The segment at 295–341 is disordered; the sequence is QNVQHDQRPDQPGSAPSTTASDNQDQWGRRRRTRRSRPPRGADDDQR. A compositionally biased stretch (polar residues) spans 308 to 320; it reads SAPSTTASDNQDQ. Positions 323–332 are enriched in basic residues; that stretch reads RRRRTRRSRP. Residues aspartate 558 and aspartate 621 each contribute to the Mn(2+) site.

Belongs to the PP2C family. As to quaternary structure, interacts with XA21 (via juxtamembrane and kinase domains). Mg(2+) is required as a cofactor. It depends on Mn(2+) as a cofactor.

It localises to the cell membrane. It catalyses the reaction O-phospho-L-seryl-[protein] + H2O = L-seryl-[protein] + phosphate. The enzyme catalyses O-phospho-L-threonyl-[protein] + H2O = L-threonyl-[protein] + phosphate. Protein phosphatase that acts on XA21 pathogen recognition receptor. Negatively regulates cell death and XA21-mediated innate immunity. The sequence is that of Protein phosphatase 2C 35 (XB15) from Oryza sativa subsp. japonica (Rice).